Here is a 345-residue protein sequence, read N- to C-terminus: Uroporphyrinogen decarboxylase (345 aa).

Residues R28 to R32, D77, Y153, S208, and H322 each bind substrate.

The protein belongs to the uroporphyrinogen decarboxylase family. As to quaternary structure, homodimer.

The protein resides in the cytoplasm. The catalysed reaction is uroporphyrinogen III + 4 H(+) = coproporphyrinogen III + 4 CO2. It functions in the pathway porphyrin-containing compound metabolism; protoporphyrin-IX biosynthesis; coproporphyrinogen-III from 5-aminolevulinate: step 4/4. Catalyzes the decarboxylation of four acetate groups of uroporphyrinogen-III to yield coproporphyrinogen-III. The chain is Uroporphyrinogen decarboxylase from Solibacter usitatus (strain Ellin6076).